The sequence spans 157 residues: MRMIQAYLCDSVSGEPYTCKGDLCEIPFNRNFTIDLVNLSVSTEFQVKITMTPHHDLGTFVVEPKNVFSIKRAVKGDAAFKVERAAGWLPDTPQVLTLFVYERLNPVEWHSECMYENLETDGGTVIVPGEATGQRFGTATEVPTMFLFKRMFVVKGV.

This chain is Immediate-early protein ICP-18, found in Frog virus 3 (isolate Goorha) (FV-3).